Reading from the N-terminus, the 522-residue chain is Cytochrome P450 9c1 (522 aa).

Position 464 (Cys-464) interacts with heme.

The protein belongs to the cytochrome P450 family. The cofactor is heme.

The protein localises to the endoplasmic reticulum membrane. Its subcellular location is the microsome membrane. Functionally, may be involved in the metabolism of insect hormones and in the breakdown of synthetic insecticides. In Drosophila melanogaster (Fruit fly), this protein is Cytochrome P450 9c1 (Cyp9c1).